A 111-amino-acid chain; its full sequence is uncharacterized protein (111 aa).

Its subcellular location is the mitochondrion. This is an uncharacterized protein from Arabidopsis thaliana (Mouse-ear cress).